A 231-amino-acid chain; its full sequence is Heptaprenylglyceryl phosphate synthase (231 aa).

K12 contributes to the sn-glycerol 1-phosphate binding site. The Mg(2+) site is built by D14 and T40. Sn-glycerol 1-phosphate-binding positions include 159–164, G189, and 209–210; these read YMEYSG and GN.

It belongs to the GGGP/HepGP synthase family. Group I subfamily. As to quaternary structure, homodimer. Requires Mg(2+) as cofactor.

It carries out the reaction sn-glycerol 1-phosphate + all-trans-heptaprenyl diphosphate = 3-heptaprenyl-sn-glycero-1-phosphate + diphosphate. Its pathway is membrane lipid metabolism; glycerophospholipid metabolism. Prenyltransferase that catalyzes in vivo the transfer of the heptaprenyl moiety of heptaprenyl pyrophosphate (HepPP; 35 carbon atoms) to the C3 hydroxyl of sn-glycerol-1-phosphate (G1P), producing heptaprenylglyceryl phosphate (HepGP). This reaction is an ether-bond-formation step in the biosynthesis of archaea-type G1P-based membrane lipids found in Bacillales. This chain is Heptaprenylglyceryl phosphate synthase, found in Brevibacillus brevis (strain 47 / JCM 6285 / NBRC 100599).